The following is a 110-amino-acid chain: Holo-[acyl-carrier-protein] synthase (110 aa).

Mg(2+) contacts are provided by Asp8 and Glu54.

The protein belongs to the P-Pant transferase superfamily. AcpS family. Mg(2+) serves as cofactor.

Its subcellular location is the cytoplasm. It carries out the reaction apo-[ACP] + CoA = holo-[ACP] + adenosine 3',5'-bisphosphate + H(+). In terms of biological role, transfers the 4'-phosphopantetheine moiety from coenzyme A to a Ser of acyl-carrier-protein. In Mycoplasma mycoides subsp. mycoides SC (strain CCUG 32753 / NCTC 10114 / PG1), this protein is Holo-[acyl-carrier-protein] synthase.